The chain runs to 292 residues: Intermediate transcription factor 3 small subunit (292 aa).

It belongs to the orthopoxvirus OPG134 family. Heterodimer of a 45 kDa (A23R) and a 32 kDa (A8R) subunit to form the virus intermediate transcription factor (VITF)-3.

Functionally, acts with RNA polymerase to initiate transcription from intermediate gene promoters. This Monkeypox virus protein is Intermediate transcription factor 3 small subunit (OPG134).